A 300-amino-acid polypeptide reads, in one-letter code: Protoheme IX farnesyltransferase (300 aa).

9 helical membrane-spanning segments follow: residues Val-24–Val-44, Val-48–Cys-68, Leu-94–Phe-114, Leu-118–Leu-138, Ile-146–Gly-166, Ala-172–Leu-192, Leu-217–Gly-237, Ser-239–Trp-259, and Ile-278–Ile-298.

This sequence belongs to the UbiA prenyltransferase family. Protoheme IX farnesyltransferase subfamily.

It localises to the cell inner membrane. It catalyses the reaction heme b + (2E,6E)-farnesyl diphosphate + H2O = Fe(II)-heme o + diphosphate. It participates in porphyrin-containing compound metabolism; heme O biosynthesis; heme O from protoheme: step 1/1. In terms of biological role, converts heme B (protoheme IX) to heme O by substitution of the vinyl group on carbon 2 of heme B porphyrin ring with a hydroxyethyl farnesyl side group. The polypeptide is Protoheme IX farnesyltransferase (Burkholderia thailandensis (strain ATCC 700388 / DSM 13276 / CCUG 48851 / CIP 106301 / E264)).